The sequence spans 216 residues: Ras-related protein Rab-2B (216 aa).

The GTP site is built by Gly16, Val17, Gly18, Lys19, Ser20, Cys21, and Thr38. Mg(2+) is bound at residue Ser20. The Switch 1 signature appears at 37 to 42 (LTIGVE). Thr38 and Asp61 together coordinate Mg(2+). The short motif at 63-72 (AGQESFRSIT) is the Switch 2 element. Residues Gly64, Asn119, Lys120, Asp122, Ala150, and Lys151 each coordinate GTP. Polar residues predominate over residues 189 to 207 (PQQSITSSVGPCSPQQNVS). The interval 189–216 (PQQSITSSVGPCSPQQNVSDIGPDSGCC) is disordered. S-geranylgeranyl cysteine attachment occurs at residues Cys215 and Cys216.

This sequence belongs to the small GTPase superfamily. Rab family. In terms of assembly, interacts (in GTP-bound form) with GARIN4 (via N-terminus). Interacts (in GTP-bound form) with GARIN5A. Interacts (in GTP-bound form) with GARIN1B. Interacts with VPS39 and VPS41. It depends on Mg(2+) as a cofactor.

The protein localises to the cell membrane. It localises to the endoplasmic reticulum membrane. Its subcellular location is the golgi apparatus membrane. The protein resides in the cytoplasmic vesicle. It is found in the secretory vesicle. The protein localises to the acrosome. It localises to the autophagosome membrane. It carries out the reaction GTP + H2O = GDP + phosphate + H(+). With respect to regulation, regulated by guanine nucleotide exchange factors (GEFs) which promote the exchange of bound GDP for free GTP, GTPase activating proteins (GAPs) which increase the GTP hydrolysis activity, and GDP dissociation inhibitors (GDIs) which inhibit the dissociation of the nucleotide from the GTPase. Its function is as follows. The small GTPases Rab are key regulators of intracellular membrane trafficking, from the formation of transport vesicles to their fusion with membranes. Rabs cycle between active GTP-bound and inactive GDP-bound states. In their active state, drive transport of vesicular carriers from donor organelles to acceptor organelles to regulate the membrane traffic that maintains organelle identity and morphology. Regulates the compacted morphology of the Golgi. Promotes cytosolic DNA-induced innate immune responses. Regulates IFN responses against DNA viruses by regulating the CGAS-STING signaling axis. Together with RAB2A redundantly required for efficient autophagic flux. The sequence is that of Ras-related protein Rab-2B (Rab2b) from Mus musculus (Mouse).